The sequence spans 189 residues: Peptidyl-tRNA hydrolase (189 aa).

TRNA is bound at residue Y15. The active-site Proton acceptor is H20. F66, N68, and N114 together coordinate tRNA.

Belongs to the PTH family. As to quaternary structure, monomer.

It is found in the cytoplasm. It carries out the reaction an N-acyl-L-alpha-aminoacyl-tRNA + H2O = an N-acyl-L-amino acid + a tRNA + H(+). Its function is as follows. Hydrolyzes ribosome-free peptidyl-tRNAs (with 1 or more amino acids incorporated), which drop off the ribosome during protein synthesis, or as a result of ribosome stalling. Functionally, catalyzes the release of premature peptidyl moieties from peptidyl-tRNA molecules trapped in stalled 50S ribosomal subunits, and thus maintains levels of free tRNAs and 50S ribosomes. The polypeptide is Peptidyl-tRNA hydrolase (Streptococcus equi subsp. zooepidemicus (strain MGCS10565)).